Consider the following 470-residue polypeptide: Ubiquitin carboxyl-terminal hydrolase calypso (470 aa).

The 232-residue stretch at 43–274 folds into the UCH catalytic domain; the sequence is GWLELESDPG…IRFNLMAVVP (232 aa). The Nucleophile role is filled by C129. The Proton donor role is filled by H211. The segment at 305–324 is disordered; the sequence is DEQGEGGNGDPQRPDTPSTL. Residues 373–401 enclose the ULD domain; that stretch reads NYDKFICTFLSMLAHQGVLGELVSQHLLP. The segment at 403–470 is positively charged C-terminal tail required for binding nucleosomes; the sequence is KKISGQSAAN…KGRNKCKKRK (68 aa). The span at 422–451 shows a compositional bias: low complexity; that stretch reads ANAGATAAGAAGAAPKSQQQQAAAAKNGKS. Residues 422-470 are disordered; that stretch reads ANAGATAAGAAGAAPKSQQQQAAAAKNGKSPSKTPGRRRKGRNKCKKRK. Over residues 456 to 470 the composition is skewed to basic residues; sequence PGRRRKGRNKCKKRK.

It belongs to the peptidase C12 family. BAP1 subfamily. Catalytic component of the polycomb repressive deubiquitinase (PR-DUB) complex, at least composed of caly/calypso, Asx and sba (MBD5/6 homolog). The PR-DUB complex associates with nucleosomes to mediate deubiquitination of histone H2AK118ub1 substrates; the association requires the positively charged C-terminal tail of caly, probably due to direct binding of DNA. Interacts (via ULD domain) with Asx (via DEUBAD domain); the interaction produces a stable heterodimer with a composite binding site for ubiquitin. Homodimerizes (via coiled-coil hinge-region between the UCH and ULD domains) to mediate assembly of 2 copies of the caly-Asx heterodimer into a bisymmetric tetramer; dimerization enhances PR-DUB association with nucleosomes.

The protein localises to the nucleus. The enzyme catalyses Thiol-dependent hydrolysis of ester, thioester, amide, peptide and isopeptide bonds formed by the C-terminal Gly of ubiquitin (a 76-residue protein attached to proteins as an intracellular targeting signal).. Functionally, catalytic component of the polycomb repressive deubiquitinase (PR-DUB) complex, a complex that specifically mediates deubiquitination of histone H2A monoubiquitinated at 'Lys-119' (H2AK118ub1). Mediates bisymmetric organization of the PR-DUB complex and is involved in association with nucleosomes to mediate deubiquitination. Does not deubiquitinate monoubiquitinated histone H2B. Required to maintain the transcriptionally repressive state of homeotic genes throughout development. The PR-DUB complex has weak or no activity toward 'Lys-48'- and 'Lys-63'-linked polyubiquitin chains. Polycomb group (PcG) protein. The polypeptide is Ubiquitin carboxyl-terminal hydrolase calypso (Drosophila ananassae (Fruit fly)).